A 776-amino-acid chain; its full sequence is Meiotic expression up-regulated protein 1/2 (776 aa).

Coiled-coil stretches lie at residues Tyr87 to Glu122, Phe173 to Glu227, Tyr265 to Glu307, Lys362 to Ser430, and Ile496 to Leu595.

In Schizosaccharomyces pombe (strain 972 / ATCC 24843) (Fission yeast), this protein is Meiotic expression up-regulated protein 1/2 (meu1).